The chain runs to 292 residues: Coiled-coil domain-containing protein 192 (292 aa).

The interval 28-55 (SVVPESDTSERSSMTSGSSESDIPQENK) is disordered. Over residues 38-49 (RSSMTSGSSESD) the composition is skewed to low complexity. Coiled coils occupy residues 65-174 (QMAF…LATA) and 222-258 (IMEL…AERS). The segment covering 251–267 (QQLEAERSPHPPQEVKD) has biased composition (basic and acidic residues). A disordered region spans residues 251 to 292 (QQLEAERSPHPPQEVKDPPGCLPEAPVFSTHDIPPVVSDENL).

The protein is Coiled-coil domain-containing protein 192 of Homo sapiens (Human).